The sequence spans 356 residues: Protein-arginine kinase (356 aa).

A Phosphagen kinase C-terminal domain is found at I24–A256. ATP contacts are provided by residues S27 to R31, H93, R127, R178 to M182, and R209 to E214. The RDXXRA motif of the pArg binding pocket involved in allosteric regulation motif lies at R339–A344.

It belongs to the ATP:guanido phosphotransferase family.

It carries out the reaction L-arginyl-[protein] + ATP = N(omega)-phospho-L-arginyl-[protein] + ADP + H(+). Its activity is regulated as follows. Appears to be allosterically activated by the binding of pArg-containing polypeptides to the pArg-binding pocket localized in the C-terminal domain of McsB. In terms of biological role, catalyzes the specific phosphorylation of arginine residues in proteins. This is Protein-arginine kinase from Pelotomaculum thermopropionicum (strain DSM 13744 / JCM 10971 / SI).